The chain runs to 82 residues: Cytochrome b-c1 complex subunit 8 (82 aa).

At glycine 2–leucine 39 the chain is on the mitochondrial matrix side. At lysine 33 the chain carries N6-acetyllysine; alternate. Lysine 33 is modified (N6-succinyllysine; alternate). A helical membrane pass occupies residues arginine 40–glutamate 68. The Mitochondrial intermembrane portion of the chain corresponds to lysine 69–arginine 82.

It belongs to the UQCRQ/QCR8 family. In terms of assembly, component of the ubiquinol-cytochrome c oxidoreductase (cytochrome b-c1 complex, complex III, CIII), a multisubunit enzyme composed of 11 subunits. The complex is composed of 3 respiratory subunits cytochrome b, cytochrome c1 and Rieske protein UQCRFS1, 2 core protein subunits UQCRC1/QCR1 and UQCRC2/QCR2, and 6 low-molecular weight protein subunits UQCRH/QCR6, UQCRB/QCR7, UQCRQ/QCR8, UQCR10/QCR9, UQCR11/QCR10 and subunit 9, the cleavage product of Rieske protein UQCRFS1. The complex exists as an obligatory dimer and forms supercomplexes (SCs) in the inner mitochondrial membrane with NADH-ubiquinone oxidoreductase (complex I, CI) and cytochrome c oxidase (complex IV, CIV), resulting in different assemblies (supercomplex SCI(1)III(2)IV(1) and megacomplex MCI(2)III(2)IV(2)). Interacts with UQCC6.

The protein resides in the mitochondrion inner membrane. In terms of biological role, component of the ubiquinol-cytochrome c oxidoreductase, a multisubunit transmembrane complex that is part of the mitochondrial electron transport chain which drives oxidative phosphorylation. The respiratory chain contains 3 multisubunit complexes succinate dehydrogenase (complex II, CII), ubiquinol-cytochrome c oxidoreductase (cytochrome b-c1 complex, complex III, CIII) and cytochrome c oxidase (complex IV, CIV), that cooperate to transfer electrons derived from NADH and succinate to molecular oxygen, creating an electrochemical gradient over the inner membrane that drives transmembrane transport and the ATP synthase. The cytochrome b-c1 complex catalyzes electron transfer from ubiquinol to cytochrome c, linking this redox reaction to translocation of protons across the mitochondrial inner membrane, with protons being carried across the membrane as hydrogens on the quinol. In the process called Q cycle, 2 protons are consumed from the matrix, 4 protons are released into the intermembrane space and 2 electrons are passed to cytochrome c. The polypeptide is Cytochrome b-c1 complex subunit 8 (UQCRQ) (Bos taurus (Bovine)).